The chain runs to 46 residues: Sperm protamine P1 (46 aa).

The protein belongs to the protamine P1 family. As to expression, testis.

It is found in the nucleus. Its subcellular location is the chromosome. Functionally, protamines substitute for histones in the chromatin of sperm during the haploid phase of spermatogenesis. They compact sperm DNA into a highly condensed, stable and inactive complex. The sequence is that of Sperm protamine P1 (PRM1) from Hypsugo savii (Savi's pipistrelle).